The primary structure comprises 293 residues: Serine/threonine-protein phosphatase 2A catalytic subunit beta isoform (293 aa).

The Mn(2+) site is built by Asp-41, His-43, Asp-69, and Asn-101. His-102 acts as the Proton donor in catalysis. Mn(2+) is bound by residues His-151 and His-225. Position 291 is a phosphotyrosine (Tyr-291). At Leu-293 the chain carries Leucine methyl ester.

Belongs to the PPP phosphatase family. PP-1 subfamily. Found in a complex with at least ARL2, PPP2CB, PPP2R1A, PPP2R2A, PPP2R5E and TBCD. Interacts with TBCD. PP2A consists of a common heterodimeric core enzyme (composed of a 36 kDa catalytic subunit (subunit C) and a 65 kDa constant regulatory subunit (PR65) (subunit A)) that associates with a variety of regulatory subunits. Proteins that associate with the core dimer include three families of regulatory subunits B (the R2/B/PR55/B55, R3/B''/PR72/PR130/PR59 and R5/B'/B56 families), the 48 kDa variable regulatory subunit, viral proteins, and cell signaling molecules. Binds PPME1. May indirectly interact with SGO1, most probably through regulatory B56 subunits. Interacts with CTTNBP2NL. Interacts with PTPA. Part of the core of STRIPAK complexes composed of PP2A catalytic and scaffolding subunits, the striatins (PP2A regulatory subunits), the striatin-associated proteins MOB4, STRIP1 and STRIP2, PDCD10 and members of the STE20 kinases, such as STK24 and STK26. Requires Mn(2+) as cofactor. In terms of processing, reversibly methyl esterified on Leu-293 by leucine carboxyl methyltransferase 1 (Lcmt1) and protein phosphatase methylesterase 1 (PPME1). Carboxyl methylation influences the affinity of the catalytic subunit for the different regulatory subunits, thereby modulating the PP2A holoenzyme's substrate specificity, enzyme activity and cellular localization. Post-translationally, phosphorylation of either threonine (by autophosphorylation-activated protein kinase) or tyrosine results in inactivation of the phosphatase. Auto-dephosphorylation has been suggested as a mechanism for reactivation. May be monoubiquitinated by NOSIP.

It localises to the cytoplasm. The protein localises to the nucleus. It is found in the chromosome. The protein resides in the centromere. Its subcellular location is the cytoskeleton. It localises to the spindle pole. The catalysed reaction is O-phospho-L-seryl-[protein] + H2O = L-seryl-[protein] + phosphate. The enzyme catalyses O-phospho-L-threonyl-[protein] + H2O = L-threonyl-[protein] + phosphate. Functionally, catalytic subunit of protein phosphatase 2A (PP2A), a serine/threonine phosphatase involved in the regulation of a wide variety of enzymes, signal transduction pathways, and cellular events. PP2A can modulate the activity of phosphorylase B kinase, casein kinase 2, mitogen-stimulated S6 kinase, and MAP-2 kinase. Part of the striatin-interacting phosphatase and kinase (STRIPAK) complexes. STRIPAK complexes have critical roles in protein (de)phosphorylation and are regulators of multiple signaling pathways including Hippo, MAPK, nuclear receptor and cytoskeleton remodeling. Different types of STRIPAK complexes are involved in a variety of biological processes such as cell growth, differentiation, apoptosis, metabolism and immune regulation. The sequence is that of Serine/threonine-protein phosphatase 2A catalytic subunit beta isoform (PPP2CB) from Sus scrofa (Pig).